The primary structure comprises 242 residues: D-proline reductase subunit gamma (242 aa).

Sec152 acts as the Nucleophile in catalysis. Sec152 is a non-standard amino acid (selenocysteine).

In terms of assembly, consists of 3 subunits of 23, 26 and 45 kDa (alpha, gamma and beta respectively). The molecular weight of the complex is approximately 870 kDa, suggesting a decameric structure, if all 3 subunits are present in equal stoichiometry. This subunit is carbonylated in vitro on an unidentified residue.

It is found in the cytoplasm. The catalysed reaction is [PrdC protein]-Se-L-selenocysteinyl-S-L-cysteine + 5-aminopentanoate = [PrdC protein]-L-selenocysteine/L-cysteine + D-proline. In terms of biological role, D-proline reductase catalyzes the reductive cleavage of a C-N bond in D-proline resulting in the formation of 5-aminovalerate. The alpha subunit has been shown to bind D-proline, presumably via the pyruvoyl group. The sequence is that of D-proline reductase subunit gamma (prdB) from Acetoanaerobium sticklandii (strain ATCC 12662 / DSM 519 / JCM 1433 / CCUG 9281 / NCIMB 10654 / HF) (Clostridium sticklandii).